The following is a 933-amino-acid chain: Dolichyl-phosphooligosaccharide-protein glycotransferase (933 aa).

At 1-22 (MYIKVKLMSNALEKINNFFKEK) the chain is on the cytoplasmic side. A helical membrane pass occupies residues 23 to 43 (SWIKVFLIILMLMFVSFQLRA). At 44-146 (QTADMKFAQD…SIDLTVTIMN (103 aa)) the chain is on the extracellular side. The DXD motif 1 signature appears at 72-74 (ALD). Aspartate 74 contributes to the Mn(2+) binding site. Residues 147-167 (AAFWVPAVLGMLLGIPIYFVV) form a helical membrane-spanning segment. Residues 168-174 (RRVTNSN) are Cytoplasmic-facing. Residues 175–195 (IGGIAGAIALISAPGLLYKTC) form a helical membrane-spanning segment. A topological domain (extracellular) is located at residue alanine 196. The helical transmembrane segment at 197–217 (GFADTPIFEVLPILFIVWFIL) threads the bilayer. Aspartate 200 lines the Mn(2+) pocket. A DXD motif 2 motif is present at residues 200-202 (DTP). The Cytoplasmic portion of the chain corresponds to 218 to 236 (ESIHSQEKTALFKKDLKNP). The chain crosses the membrane as a helical span at residues 237–257 (ISLFVIAALIIELIIGAYLNI). At 258-263 (ASGESV) the chain is on the extracellular side. Residues 264-284 (VIASILFYTVSLAFILAGLII) traverse the membrane as a helical segment. Topologically, residues 285-296 (AGIKKLKGNELE) are cytoplasmic. Residues 297-317 (FELFALLAVILTAVSPKMWGA) traverse the membrane as a helical segment. Tryptophan 318 is a topological domain (extracellular). The helical transmembrane segment at 319 to 339 (WYGFDVITAFLVIYIIALALL) threads the bilayer. Topologically, residues 340–361 (KSQVKIKEFINIGNLKNIVYLS) are cytoplasmic. A helical membrane pass occupies residues 362–382 (IFYIFGSFVLLVAIYGMGIAI). The Extracellular portion of the chain corresponds to 383–427 (SPITSPLGYNQILSTYTQTTGWPNVYTTVAELAKPSSWSEIFTNA). The TIXE motif motif lies at 410 to 413 (TVAE). A Mn(2+)-binding site is contributed by glutamate 413. The helical transmembrane segment at 428–448 (IGSDTIAIVGILGILLSFLSL) threads the bilayer. The Cytoplasmic segment spans residues 449–454 (RYEKVK). A helical membrane pass occupies residues 455–475 (LDIKYSILLAIWLAVTLYAAT). Topologically, residues 476-479 (KGIR) are extracellular. Arginine 479 contacts a glycophospholipid. Residues 480 to 500 (FAALATPPLAIGLGIFVGQLE) form a helical membrane-spanning segment. Over 501 to 581 (RFLKMKSDIA…KKETIIKVST (81 aa)) the chain is Cytoplasmic. The helical transmembrane segment at 582–602 (LLLCIGVVIPPLSAVVPFSVA) threads the bilayer. Over 603–933 (PTFNNGWKEG…KVDYGTDYLK (331 aa)) the chain is Extracellular. The interval 629-631 (WWD) is interacts with target acceptor peptide in protein substrate. A WWDYG motif motif is present at residues 629–633 (WWDNG). The MI motif motif lies at 756-763 (MTDIAPVW).

Belongs to the STT3 family. Requires Mn(2+) as cofactor. The cofactor is Mg(2+).

The protein resides in the cell membrane. The catalysed reaction is an archaeal dolichyl phosphooligosaccharide + [protein]-L-asparagine = an archaeal dolichyl phosphate + a glycoprotein with the oligosaccharide chain attached by N-beta-D-glycosyl linkage to a protein L-asparagine.. The protein operates within cell surface structure biogenesis; S-layer biogenesis. It functions in the pathway protein modification; protein glycosylation. Functionally, oligosaccharyl transferase (OST) that catalyzes the initial transfer of a defined glycan (ManNAcGlc-2,3-diNAcAGlcNAc in Methanococci) from the lipid carrier dolichol-monophosphate to an asparagine residue within an Asn-X-Ser/Thr consensus motif in nascent polypeptide chains, the first step in protein N-glycosylation. Involved in the assembly of an N-linked disaccharide that decorates the S-layer glycoprotein and flagellins. In Methanocaldococcus jannaschii (strain ATCC 43067 / DSM 2661 / JAL-1 / JCM 10045 / NBRC 100440) (Methanococcus jannaschii), this protein is Dolichyl-phosphooligosaccharide-protein glycotransferase (aglB).